A 252-amino-acid polypeptide reads, in one-letter code: Imidazole glycerol phosphate synthase subunit HisF (252 aa).

Catalysis depends on residues D11 and D130.

This sequence belongs to the HisA/HisF family. Heterodimer of HisH and HisF.

The protein resides in the cytoplasm. It catalyses the reaction 5-[(5-phospho-1-deoxy-D-ribulos-1-ylimino)methylamino]-1-(5-phospho-beta-D-ribosyl)imidazole-4-carboxamide + L-glutamine = D-erythro-1-(imidazol-4-yl)glycerol 3-phosphate + 5-amino-1-(5-phospho-beta-D-ribosyl)imidazole-4-carboxamide + L-glutamate + H(+). It functions in the pathway amino-acid biosynthesis; L-histidine biosynthesis; L-histidine from 5-phospho-alpha-D-ribose 1-diphosphate: step 5/9. Functionally, IGPS catalyzes the conversion of PRFAR and glutamine to IGP, AICAR and glutamate. The HisF subunit catalyzes the cyclization activity that produces IGP and AICAR from PRFAR using the ammonia provided by the HisH subunit. The chain is Imidazole glycerol phosphate synthase subunit HisF from Acinetobacter baumannii (strain AB307-0294).